A 350-amino-acid chain; its full sequence is Arabinogalactan endo-beta-1,4-galactanase (350 aa).

Residues 1–16 form the signal peptide; that stretch reads MFASLLLAALPLLTHA. N128 carries N-linked (GlcNAc...) asparagine glycosylation. The active-site Proton donor is E152. E262 (nucleophile) is an active-site residue.

Belongs to the glycosyl hydrolase 53 family. In terms of processing, glycosylated.

The catalysed reaction is The enzyme specifically hydrolyzes (1-&gt;4)-beta-D-galactosidic linkages in type I arabinogalactans.. The chain is Arabinogalactan endo-beta-1,4-galactanase (gal1) from Aspergillus aculeatus.